The following is a 1713-amino-acid chain: Serine/threonine-protein kinase MRCK beta (1713 aa).

The Protein kinase domain maps to 76–342 (FEIIKVIGRG…IEDFKKHAFF (267 aa)). Residues 82-90 (IGRGAFGEV) and lysine 105 each bind ATP. The active-site Proton acceptor is aspartate 200. Phosphoserine; by autocatalysis occurs at positions 221 and 233. Threonine 239 carries the phosphothreonine; by autocatalysis modification. The AGC-kinase C-terminal domain maps to 343-413 (EGLNWENIRN…TTESCFSDRG (71 aa)). The residue at position 423 (threonine 423) is a Phosphothreonine. The stretch at 434–649 (LENSLQIEAY…ASKERKLREH (216 aa)) forms a coiled coil. Position 671 is an omega-N-methylarginine (arginine 671). Coiled coils occupy residues 681–815 (QEIS…AHWE) and 878–939 (ELQS…FRAD). A Phosphoserine modification is found at serine 927. Tyrosine 954 carries the phosphotyrosine modification. Residues 971–994 (ASDQETQASKMDLSPSVSVATSTE) show a composition bias toward polar residues. The segment at 971–1022 (ASDQETQASKMDLSPSVSVATSTEQQEDMARPQQRPSPVPLPSTQALAMAGP) is disordered. The segment at 1026–1076 (AHQFSIKSFPSPTQCSHCTSLMVGLIRQGYACEVCAFSCHVSCKDSAPQVC) adopts a Phorbol-ester/DAG-type zinc-finger fold. A PH domain is found at 1096–1215 (GTAYKGYVKV…WVGILEGLQA (120 aa)). A CNH domain is found at 1241 to 1515 (IKAVLAAAIV…RPLNSDGSLN (275 aa)). A CRIB domain is found at 1585–1598 (ISNPTNFNHVAHMG). The interval 1616 to 1713 (TVQEEKQGPT…EGLDQPSCDA (98 aa)) is disordered. Over residues 1666–1677 (DFDKEPDSDSTK) the composition is skewed to basic and acidic residues. Serine 1682, serine 1684, serine 1688, serine 1692, and serine 1695 each carry phosphoserine.

Belongs to the protein kinase superfamily. AGC Ser/Thr protein kinase family. DMPK subfamily. In terms of assembly, homodimer and homotetramer via the coiled coil regions. Interacts tightly with GTP-bound but not GDP-bound CDC42. Interacts with TJP1; this interaction requires the presence of catalytically active CDC42. Forms a tripartite complex with MYO18A and LURAP1 with the latter acting as an adapter connecting CDC42BPB and MYO18A. LURAP1 binding results in activation of CDC42BPB by abolition of its negative autoregulation. Interacts with STRIP1, STRN3 and SIKE1. Interacts with CPNE4 (via VWFA domain). Interacts with LURAP1. Interacts (via AGC-kinase C-terminal domain) with FAM89B/LRAP25 (via LRR repeat). Forms a tripartite complex with FAM89B/LRAP25 and LIMK1. Mg(2+) is required as a cofactor. Post-translationally, proteolytically cleaved by caspases upon apoptosis induction.

The protein resides in the cytoplasm. It localises to the cell membrane. The protein localises to the cell junction. It is found in the cell projection. Its subcellular location is the lamellipodium. The enzyme catalyses L-seryl-[protein] + ATP = O-phospho-L-seryl-[protein] + ADP + H(+). The catalysed reaction is L-threonyl-[protein] + ATP = O-phospho-L-threonyl-[protein] + ADP + H(+). Its activity is regulated as follows. Maintained in an inactive, closed conformation by an interaction between the kinase domain and the negative autoregulatory C-terminal coiled-coil region. Agonist binding to the phorbol ester binding site disrupts this, releasing the kinase domain to allow N-terminus-mediated dimerization and kinase activation by transautophosphorylation. Inhibited by chelerythrine chloride. Functionally, serine/threonine-protein kinase which is an important downstream effector of CDC42 and plays a role in the regulation of cytoskeleton reorganization and cell migration. Regulates actin cytoskeletal reorganization via phosphorylation of PPP1R12C and MYL9/MLC2. In concert with MYO18A and LURAP1, is involved in modulating lamellar actomyosin retrograde flow that is crucial to cell protrusion and migration. Phosphorylates PPP1R12A. In concert with FAM89B/LRAP25 mediates the targeting of LIMK1 to the lamellipodium resulting in its activation and subsequent phosphorylation of CFL1 which is important for lamellipodial F-actin regulation. The polypeptide is Serine/threonine-protein kinase MRCK beta (Mus musculus (Mouse)).